Reading from the N-terminus, the 39-residue chain is Cytochrome b559 subunit beta (39 aa).

A helical transmembrane segment spans residues Trp14 to Ser30. His18 contributes to the heme binding site.

It belongs to the PsbE/PsbF family. As to quaternary structure, heterodimer of an alpha subunit and a beta subunit. PSII is composed of 1 copy each of membrane proteins PsbA, PsbB, PsbC, PsbD, PsbE, PsbF, PsbH, PsbI, PsbJ, PsbK, PsbL, PsbM, PsbT, PsbX, PsbY, PsbZ, Psb30/Ycf12, at least 3 peripheral proteins of the oxygen-evolving complex and a large number of cofactors. It forms dimeric complexes. It depends on heme b as a cofactor.

The protein resides in the plastid membrane. Functionally, this b-type cytochrome is tightly associated with the reaction center of photosystem II (PSII). PSII is a light-driven water:plastoquinone oxidoreductase that uses light energy to abstract electrons from H(2)O, generating O(2) and a proton gradient subsequently used for ATP formation. It consists of a core antenna complex that captures photons, and an electron transfer chain that converts photonic excitation into a charge separation. In Cuscuta europaea (European dodder), this protein is Cytochrome b559 subunit beta.